The following is a 103-amino-acid chain: c-Myc-binding protein (103 aa).

It belongs to the AMY1 family. Binds via its C-terminal region to the N-terminal region of MYC. Associates with AKAP1/S-AKAP84. Interacts with MYCBPAP. Interacts with CFAP91.

It is found in the cytoplasm. Its subcellular location is the nucleus. Functionally, may control the transcriptional activity of MYC. Stimulates the activation of E box-dependent transcription by MYC. This Pongo abelii (Sumatran orangutan) protein is c-Myc-binding protein (MYCBP).